Consider the following 366-residue polypeptide: Anhydro-N-acetylmuramic acid kinase (366 aa).

12-19 is a binding site for ATP; the sequence is GTSMDGAD.

Belongs to the anhydro-N-acetylmuramic acid kinase family.

The enzyme catalyses 1,6-anhydro-N-acetyl-beta-muramate + ATP + H2O = N-acetyl-D-muramate 6-phosphate + ADP + H(+). The protein operates within amino-sugar metabolism; 1,6-anhydro-N-acetylmuramate degradation. It participates in cell wall biogenesis; peptidoglycan recycling. In terms of biological role, catalyzes the specific phosphorylation of 1,6-anhydro-N-acetylmuramic acid (anhMurNAc) with the simultaneous cleavage of the 1,6-anhydro ring, generating MurNAc-6-P. Is required for the utilization of anhMurNAc either imported from the medium or derived from its own cell wall murein, and thus plays a role in cell wall recycling. In Neisseria meningitidis serogroup C (strain 053442), this protein is Anhydro-N-acetylmuramic acid kinase.